We begin with the raw amino-acid sequence, 98 residues long: Large ribosomal subunit protein bL27 (98 aa).

A propeptide spanning residues 1–9 is cleaved from the precursor; it reads MLKMNLQLF.

Belongs to the bacterial ribosomal protein bL27 family. Post-translationally, the N-terminus is cleaved by ribosomal processing cysteine protease Prp.

The polypeptide is Large ribosomal subunit protein bL27 (Desulfitobacterium hafniense (strain DSM 10664 / DCB-2)).